A 93-amino-acid chain; its full sequence is Large ribosomal subunit protein uL23cz/uL23cy (93 aa).

Belongs to the universal ribosomal protein uL23 family. Part of the 50S ribosomal subunit.

The protein resides in the plastid. It is found in the chloroplast. Binds to 23S rRNA. This is Large ribosomal subunit protein uL23cz/uL23cy (rpl23-A) from Atropa belladonna (Belladonna).